The sequence spans 490 residues: Betaine aldehyde dehydrogenase (490 aa).

3 residues coordinate K(+): T26, I27, and D93. 150–152 (GAW) serves as a coordination point for NAD(+). The Charge relay system role is filled by K162. An NAD(+)-binding site is contributed by 176 to 179 (KPSE). Position 180 (V180) interacts with K(+). An NAD(+)-binding site is contributed by 230-233 (GVAS). Residue L246 coordinates K(+). E252 acts as the Proton acceptor in catalysis. NAD(+)-binding residues include G254, C286, and E387. The active-site Nucleophile is the C286. C286 carries the cysteine sulfenic acid (-SOH) modification. K(+) contacts are provided by K457 and G460. E464 (charge relay system) is an active-site residue.

This sequence belongs to the aldehyde dehydrogenase family. In terms of assembly, dimer of dimers. The cofactor is K(+).

It catalyses the reaction betaine aldehyde + NAD(+) + H2O = glycine betaine + NADH + 2 H(+). The protein operates within amine and polyamine biosynthesis; betaine biosynthesis via choline pathway; betaine from betaine aldehyde: step 1/1. Functionally, involved in the biosynthesis of the osmoprotectant glycine betaine. Catalyzes the irreversible oxidation of betaine aldehyde to the corresponding acid. The polypeptide is Betaine aldehyde dehydrogenase (Escherichia coli O8 (strain IAI1)).